Here is a 498-residue protein sequence, read N- to C-terminus: Glutamyl-tRNA(Gln) amidotransferase subunit A (498 aa).

Residues lysine 80 and serine 155 each act as charge relay system in the active site. Residues serine 132–serine 159 form a disordered region. Serine 179 serves as the catalytic Acyl-ester intermediate.

The protein belongs to the amidase family. GatA subfamily. In terms of assembly, heterotrimer of A, B and C subunits.

It catalyses the reaction L-glutamyl-tRNA(Gln) + L-glutamine + ATP + H2O = L-glutaminyl-tRNA(Gln) + L-glutamate + ADP + phosphate + H(+). In terms of biological role, allows the formation of correctly charged Gln-tRNA(Gln) through the transamidation of misacylated Glu-tRNA(Gln) in organisms which lack glutaminyl-tRNA synthetase. The reaction takes place in the presence of glutamine and ATP through an activated gamma-phospho-Glu-tRNA(Gln). The chain is Glutamyl-tRNA(Gln) amidotransferase subunit A from Thermobifida fusca (strain YX).